Here is a 142-residue protein sequence, read N- to C-terminus: MAKEFSRTRRIAQQLQQELAVILQRDMKDPRIGFVTVNDVDVSRDLSYAKVFVTFYEEDLTLVEQKIAALTAAAPYVRTLVAGRMKLRVMPELRFIYDSSLVEGMRMSNLVSQVITNDKAKQKQAGREDDTPSVDEQEKDTD.

Residues 118–130 show a composition bias toward basic and acidic residues; that stretch reads DKAKQKQAGREDD. The disordered stretch occupies residues 118–142; sequence DKAKQKQAGREDDTPSVDEQEKDTD. Residues 131–142 show a composition bias toward acidic residues; sequence TPSVDEQEKDTD.

Belongs to the RbfA family. Monomer. Binds 30S ribosomal subunits, but not 50S ribosomal subunits or 70S ribosomes.

It is found in the cytoplasm. Functionally, one of several proteins that assist in the late maturation steps of the functional core of the 30S ribosomal subunit. Associates with free 30S ribosomal subunits (but not with 30S subunits that are part of 70S ribosomes or polysomes). Required for efficient processing of 16S rRNA. May interact with the 5'-terminal helix region of 16S rRNA. The protein is Ribosome-binding factor A of Shewanella denitrificans (strain OS217 / ATCC BAA-1090 / DSM 15013).